The primary structure comprises 380 residues: Cytochrome b (380 aa).

The next 4 membrane-spanning stretches (helical) occupy residues Phe-34–Thr-54, Trp-78–Ile-99, Trp-114–Leu-134, and Phe-179–Thr-199. Heme b-binding residues include His-84 and His-98. Heme b is bound by residues His-183 and His-197. An a ubiquinone-binding site is contributed by His-202. A run of 4 helical transmembrane segments spans residues Leu-227–Ser-247, Leu-289–His-309, Leu-321–Ser-341, and Phe-348–Pro-368.

It belongs to the cytochrome b family. In terms of assembly, the cytochrome bc1 complex contains 11 subunits: 3 respiratory subunits (MT-CYB, CYC1 and UQCRFS1), 2 core proteins (UQCRC1 and UQCRC2) and 6 low-molecular weight proteins (UQCRH/QCR6, UQCRB/QCR7, UQCRQ/QCR8, UQCR10/QCR9, UQCR11/QCR10 and a cleavage product of UQCRFS1). This cytochrome bc1 complex then forms a dimer. Heme b is required as a cofactor.

The protein localises to the mitochondrion inner membrane. Its function is as follows. Component of the ubiquinol-cytochrome c reductase complex (complex III or cytochrome b-c1 complex) that is part of the mitochondrial respiratory chain. The b-c1 complex mediates electron transfer from ubiquinol to cytochrome c. Contributes to the generation of a proton gradient across the mitochondrial membrane that is then used for ATP synthesis. The chain is Cytochrome b (MT-CYB) from Ciconia ciconia (White stork).